Reading from the N-terminus, the 503-residue chain is Glutamate/gamma-aminobutyrate antiporter (503 aa).

33–43 (LHLVFFLLLGG) contacts L-glutamate. 7 helical membrane-spanning segments follow: residues 35–55 (LVFF…LCAA), 153–173 (FVVG…AYFI), 194–214 (VSTL…EASA), 232–252 (ILLV…VAAV), 366–386 (LTVV…FVLI), 407–427 (IIAG…FVPP), and 440–460 (MILL…YELH).

It belongs to the amino acid-polyamine-organocation (APC) superfamily. Glutamate:GABA antiporter (GGA) (TC 2.A.3.7) family.

The protein resides in the cell membrane. It carries out the reaction 4-aminobutanoate(in) + L-glutamate(out) = 4-aminobutanoate(out) + L-glutamate(in). Functionally, involved in glutaminase-dependent acid resistance. Exchanges extracellular glutamate (Glu) for intracellular gamma-aminobutyric acid (GABA) under acidic conditions. In Lactococcus lactis subsp. cremoris (strain MG1363), this protein is Glutamate/gamma-aminobutyrate antiporter.